The sequence spans 270 residues: Phosphatidylinositol transfer protein alpha isoform (270 aa).

Positions 58, 60, 85, 89, 96, and 194 each coordinate a 1,2-diacyl-sn-glycero-3-phospho-(1D-myo-inositol). Position 215 is an N6-acetyllysine (lysine 215).

The protein belongs to the PtdIns transfer protein family. PI transfer class I subfamily. Phosphorylated by PKC in a calcium and phosphatidylserine-dependent manner.

Its subcellular location is the cytoplasm. It is found in the nucleus. The catalysed reaction is a 1,2-diacyl-sn-glycero-3-phosphocholine(in) = a 1,2-diacyl-sn-glycero-3-phosphocholine(out). It catalyses the reaction a 1,2-diacyl-sn-glycero-3-phospho-(1D-myo-inositol)(in) = a 1,2-diacyl-sn-glycero-3-phospho-(1D-myo-inositol)(out). Functionally, catalyzes the transfer of phosphatidylinositol (PI) and phosphatidylcholine (PC) between membranes. Shows a preference for PI and PC containing shorter saturated or monosaturated acyl chains at the sn-1 and sn-2 positions. Preference order for PC is C16:1 &gt; C16:0 &gt; C18:1 &gt; C18:0 &gt; C20:4 and for PI is C16:1 &gt; C16:0 &gt; C18:1 &gt; C18:0 &gt; C20:4 &gt; C20:3. This is Phosphatidylinositol transfer protein alpha isoform (PITPNA) from Bos taurus (Bovine).